A 545-amino-acid chain; its full sequence is MADISISPDEIRDALKDFVSKYEPAKAATAEVGHVLDASDGIAHVEGLPGVMANELIRFADGTLGLAQNLDENEIGVVVLGEFEGIVEGMEVTRTGEVLSVPVGDGYLGRVVDPLGNPIDGLGEIATEGRRELELQAPGVMHRKSVHEPLQTGIKAIDAMIPVGRGQRQLIIGDRQTGKTAIAIDTIINQKANWESGDVTKQVRCIYVAVGQKGSTIAAVKGALEDAGAMEYTTIVAAPASDPAGFKYLAPYTGSAIGQHWMYGGKHVLIIFDDLSKQAEAYRAVSLLLRRPPGREAYPGDVFYLHSRLLERCAKLSDELGAGSMTGLPIIETKANDVSAYIPTNVISITDGQIFLQSDLFNANQRPAVDVGISVSRVGGDAQVKSIKKVSGTLKLELAQYRSLEAFAMFASDLDAASRRQLARGARLTELLKQPQYSPYPVEEQVVSIWAGINGKLDEVAVEDVLRFESELLDHLRRNTGILTTLRDTNVLDDETVEKLSSEVDAFKLEFQTGEGKPLAAVGREDFDAIAEEDVNQERIVKAKR.

Residue 173 to 180 (GDRQTGKT) participates in ATP binding.

This sequence belongs to the ATPase alpha/beta chains family. As to quaternary structure, F-type ATPases have 2 components, CF(1) - the catalytic core - and CF(0) - the membrane proton channel. CF(1) has five subunits: alpha(3), beta(3), gamma(1), delta(1), epsilon(1). CF(0) has three main subunits: a(1), b(2) and c(9-12). The alpha and beta chains form an alternating ring which encloses part of the gamma chain. CF(1) is attached to CF(0) by a central stalk formed by the gamma and epsilon chains, while a peripheral stalk is formed by the delta and b chains.

It localises to the cell membrane. The catalysed reaction is ATP + H2O + 4 H(+)(in) = ADP + phosphate + 5 H(+)(out). Its function is as follows. Produces ATP from ADP in the presence of a proton gradient across the membrane. The alpha chain is a regulatory subunit. This is ATP synthase subunit alpha from Leifsonia xyli subsp. xyli (strain CTCB07).